The chain runs to 751 residues: Kelch-like protein 1 (751 aa).

Low complexity-rich tracts occupy residues P25–S36 and S74–S90. 3 disordered regions span residues P25–Q54, F69–T98, and S157–D184. Residues L170–D184 show a composition bias toward polar residues. In terms of domain architecture, BTB spans C215 to E282. 6 Kelch repeats span residues T463–D509, K510–G556, I558–G603, K604–G650, L652–D703, and R704–Q750.

In terms of tissue distribution, highly expressed in brain.

It is found in the cytoplasm. It localises to the cytoskeleton. In terms of biological role, may play a role in organizing the actin cytoskeleton of the brain cells. The polypeptide is Kelch-like protein 1 (Klhl1) (Mus musculus (Mouse)).